A 115-amino-acid chain; its full sequence is Transcription initiation factor IIA subunit 2 (115 aa).

The protein belongs to the TFIIA subunit 2 family. As to quaternary structure, TFIIA is a heterodimer of the large unprocessed subunit 1 and a small subunit gamma.

It is found in the nucleus. Functionally, TFIIA is a component of the transcription machinery of RNA polymerase II and plays an important role in transcriptional activation. TFIIA in a complex with tbp mediates transcriptional activity. In Dictyostelium discoideum (Social amoeba), this protein is Transcription initiation factor IIA subunit 2 (gtf2a2).